Reading from the N-terminus, the 259-residue chain is MKKRHTVNTIKSAKNSNKLVMITAYDALFAKLFEPIVDMILVGDSLNMVFAGRSDTLSATLDQMIYHANAVCSGAPSAFVVLDMPYGTYINEKEALQNAIRIYKETDVDAVKLEGGKEKADLIKTLCQNGIAVMGHIGLLPQHVRGQGGYKVVREADRLMEDAKALEEAGVFSIIIEGVKPEVAAKVTDAVQVPVIGIGAGKETDGQVLVWSDMLGFFEDFKPKFVKQYLNGAKLVKEAVSQYAKEVKEGSFPSQEFSY.

Positions 44 and 83 each coordinate Mg(2+). 3-methyl-2-oxobutanoate-binding positions include 44-45 (DS), aspartate 83, and lysine 112. Residue glutamate 114 coordinates Mg(2+). Catalysis depends on glutamate 177, which acts as the Proton acceptor.

This sequence belongs to the PanB family. In terms of assembly, homodecamer; pentamer of dimers. Requires Mg(2+) as cofactor.

It localises to the cytoplasm. It catalyses the reaction 3-methyl-2-oxobutanoate + (6R)-5,10-methylene-5,6,7,8-tetrahydrofolate + H2O = 2-dehydropantoate + (6S)-5,6,7,8-tetrahydrofolate. It participates in cofactor biosynthesis; (R)-pantothenate biosynthesis; (R)-pantoate from 3-methyl-2-oxobutanoate: step 1/2. Functionally, catalyzes the reversible reaction in which hydroxymethyl group from 5,10-methylenetetrahydrofolate is transferred onto alpha-ketoisovalerate to form ketopantoate. In Nitratiruptor sp. (strain SB155-2), this protein is 3-methyl-2-oxobutanoate hydroxymethyltransferase.